Reading from the N-terminus, the 375-residue chain is Acetylornithine aminotransferase (375 aa).

Pyridoxal 5'-phosphate-binding positions include 93 to 94 (GT) and Phe-120. Arg-123 is a N(2)-acetyl-L-ornithine binding site. Position 205 to 208 (205 to 208 (DEVQ)) interacts with pyridoxal 5'-phosphate. The residue at position 234 (Lys-234) is an N6-(pyridoxal phosphate)lysine. Thr-262 contacts N(2)-acetyl-L-ornithine. Thr-263 contacts pyridoxal 5'-phosphate.

It belongs to the class-III pyridoxal-phosphate-dependent aminotransferase family. ArgD subfamily. In terms of assembly, homodimer. Requires pyridoxal 5'-phosphate as cofactor.

The protein localises to the cytoplasm. The catalysed reaction is N(2)-acetyl-L-ornithine + 2-oxoglutarate = N-acetyl-L-glutamate 5-semialdehyde + L-glutamate. The protein operates within amino-acid biosynthesis; L-arginine biosynthesis; N(2)-acetyl-L-ornithine from L-glutamate: step 4/4. This chain is Acetylornithine aminotransferase, found in Staphylococcus epidermidis (strain ATCC 12228 / FDA PCI 1200).